Reading from the N-terminus, the 447-residue chain is MAVTDRDIFTVTRLNQAVQGLLEGTFPLIWVEGELSSVSRPASGHLYFTLKDSGAQVRCALFRNRAQLMRFRPADGMQVLVRARVGLYAPRGDYQLIVEHMEEAGDGALRRAFEELKQRLEREGLFDAERKRPLPRFPRRLGVITSPTGAAIRDILSVLRRRFPGLPALIYPVPVQGAAAAPAIAEALRTASARKDCDVLILARGGGSLEDLWAFNEEIVARAIHDCEIPVVSGVGHEVDVTIADLAADLRAATPSAAAELVSPLRDEWLLHVERQRRLLVERMQRGLQHQALKLDNLERRLRQQHPERRLQNQAQRVDELERRLALAMQHRLRHRESRLARLQDRLQHRSPARALERLEAREAQLRLRLDSALRRRLDRFEARLAAAGRALHSVSPLATLGRGYSILTTAEGQVIRDASQVQVNDRVEARLGKGRLSCTVVTRYEG.

The protein belongs to the XseA family. In terms of assembly, heterooligomer composed of large and small subunits.

The protein resides in the cytoplasm. The enzyme catalyses Exonucleolytic cleavage in either 5'- to 3'- or 3'- to 5'-direction to yield nucleoside 5'-phosphates.. Functionally, bidirectionally degrades single-stranded DNA into large acid-insoluble oligonucleotides, which are then degraded further into small acid-soluble oligonucleotides. The chain is Exodeoxyribonuclease 7 large subunit from Thioalkalivibrio sulfidiphilus (strain HL-EbGR7).